The primary structure comprises 238 residues: Ion-translocating oxidoreductase complex subunit E (238 aa).

A run of 6 helical transmembrane segments spans residues 24 to 44 (ALWQ…TLAV), 52 to 72 (LGMG…ISSM), 84 to 104 (VMIG…NAWM), 106 to 126 (ELYK…AVLG), 141 to 161 (ILDG…IGGI), and 195 to 215 (GILL…LLAA).

Belongs to the NqrDE/RnfAE family. The complex is composed of six subunits: RnfA, RnfB, RnfC, RnfD, RnfE and RnfG.

It localises to the cell inner membrane. Its function is as follows. Part of a membrane-bound complex that couples electron transfer with translocation of ions across the membrane. The sequence is that of Ion-translocating oxidoreductase complex subunit E from Azotobacter vinelandii (strain DJ / ATCC BAA-1303).